A 3117-amino-acid chain; its full sequence is Centrosome-associated protein 350 (3117 aa).

The disordered stretch occupies residues 1-24; that stretch reads MRSSKSKEVPLPNPRNSQSKDTVQ. Over residues 14-24 the composition is skewed to polar residues; the sequence is PRNSQSKDTVQ. Phosphoserine is present on residues serine 86, serine 139, serine 142, and serine 218. Disordered regions lie at residues 249–275, 436–514, 548–625, and 671–722; these read PKAL…ILKR, ILGP…NKQE, TVEL…TEQK, and LEEP…PPQP. Residues 255–267 show a composition bias toward low complexity; it reads TDSSPSSTSTSNS. Residues 469 to 501 are compositionally biased toward basic and acidic residues; sequence GRAESDPRLDVLHRHLQRNSERSRSKSRSENNI. Phosphoserine is present on residues serine 473 and serine 507. Residues 563-573 are compositionally biased toward basic residues; it reads PRSHSPVKRKP. 2 stretches are compositionally biased toward basic and acidic residues: residues 591–625 and 694–703; these read YDTD…TEQK and ESDKENKVQE. Positions 598–645 form a coiled coil; the sequence is QYIVRQQEERKRKQNEEKKAQKEATEQKNKRLQELYRKQKEAFTKVKN. Serine 695 bears the Phosphoserine mark. Positions 705-718 are enriched in low complexity; it reads PPSASSSSDMSLSE. A Phosphothreonine modification is found at threonine 878. Serine 939 bears the Phosphoserine mark. Residues 981–992 are compositionally biased toward low complexity; that stretch reads SVSEGPLLSEGS. The tract at residues 981–1002 is disordered; that stretch reads SVSEGPLLSEGSLSEEEGDQDG. Serine 1061 bears the Phosphoserine mark. Residues 1081-1298 form a disordered region; the sequence is EDKLDRGTST…GFKPNAPLTD (218 aa). Positions 1087–1102 are enriched in polar residues; it reads GTSTSRPLNATATPLS. Over residues 1135–1144 the composition is skewed to basic and acidic residues; the sequence is QEDHSNRKSA. Composition is skewed to low complexity over residues 1153–1172 and 1251–1267; these read TSQH…STSS and QKTP…KSLQ. Threonine 1253 carries the phosphothreonine modification. Serine 1256 and serine 1259 each carry phosphoserine. Residues 1272-1283 show a composition bias toward polar residues; the sequence is GTSSERSKSSVM. Residues 1369–1411 are a coiled coil; the sequence is IKAQQQRHERDLALLKLKAEQEALESQRQLEETRNKAAQVHAE. 2 disordered regions span residues 1494-1674 and 1794-1854; these read TRTE…GGQD and KLKS…SRMD. The segment covering 1503 to 1512 has biased composition (polar residues); it reads PSVSLSQSKE. Composition is skewed to low complexity over residues 1522 to 1535 and 1543 to 1556; these read YSAS…SSGY and SSGS…SVPS. Basic and acidic residues predominate over residues 1558-1571; it reads KENEKKLNGEKIES. Position 1613 is a phosphoserine (serine 1613). Residues 1631 to 1647 show a composition bias toward basic and acidic residues; it reads ESHRRFNMEKRRGHHDD. Serine 1648 and serine 1653 each carry phosphoserine. The stretch at 1707–1800 forms a coiled coil; it reads KALKEKTKAE…LQEKLKSAGE (94 aa). The segment covering 1794-1815 has biased composition (basic and acidic residues); sequence KLKSAGESKLDSHSDDDTKDNK. Serine 1818 is modified (phosphoserine). Residues 1827 to 1841 show a composition bias toward low complexity; the sequence is RSPSPISISSSETSS. Positions 1856 to 1899 form a coiled coil; the sequence is KFLTKREQKLMQRRQHAEELLEWKRRLDAEEAEIRQMEKQALAA. A compositionally biased stretch (basic and acidic residues) spans 1903–1925; that stretch reads ELIKPKTPKKELEDQRTEQKEIA. 4 disordered regions span residues 1903–2020, 2107–2221, 2329–2356, and 2407–2432; these read ELIK…QCHL, ELSQ…ESGD, LKER…QKNT, and KDSQ…FGSN. Serine 1936 bears the Phosphoserine mark. The segment covering 1983-2005 has biased composition (polar residues); that stretch reads ELESSTSPSKHSLPKSCTSVSKQ. Residues 2051–2110 adopt a coiled-coil conformation; it reads EGRIRALKDELRKRKSVVNQLKKEQKKRQKERLKAQEASLIKQLESYDEFIKKTEAELSQ. A compositionally biased stretch (polar residues) spans 2111–2129; sequence DLETSPTAKPQIKTLSSAS. A Phosphoserine modification is found at serine 2115. The segment covering 2141–2170 has biased composition (basic and acidic residues); it reads HRSETAKNWKSLTESERSRGSLESIAEHVD. Residues 2173–2184 are compositionally biased toward polar residues; it reads LSGSERSVSERS. Residues 2191 to 2201 are compositionally biased toward basic and acidic residues; sequence RVNEWDSRTED. The residue at position 2204 (threonine 2204) is a Phosphothreonine. Serine 2206 carries the post-translational modification Phosphoserine. Basic and acidic residues-rich tracts occupy residues 2329–2338 and 2407–2417; these read LKERQSDQDM and KDSQSCRDKPQ. Residues 2419–2432 are compositionally biased toward polar residues; sequence MRSSTSGATSFGSN. Phosphoserine is present on residues serine 2431 and serine 2460. Positions 2465-2478 are enriched in basic and acidic residues; it reads MKSKERSDVEHEQQ. Residues 2465–2485 form a disordered region; that stretch reads MKSKERSDVEHEQQVTESPSL. The CAP-Gly domain occupies 2517–2559; it reads GETSFAKGFWAGVELDKPEGNNNGTYDGIAYFECKEKHGIFAP. Position 2689 is a phosphothreonine (threonine 2689). Residues 2719–2752 adopt a coiled-coil conformation; sequence LLDLLTREKNQLEAQLKSSLNEEKKSKQQLEKIS. A phosphoserine mark is found at serine 2830 and serine 2839.

Part of a ternary complex that contains CEP350, CEP43 and MAPRE1. Interacts (via C-terminus) directly with CEP43 (via N-terminus). Interacts with NR1H3, PPARA, PPARD and PPARG. Interacts directly with microtubules. Interacts with the fusion protein CEP43-FGFR1, and by doing so recruits and activates PI3K and PLC-gamma. Interacts with CYLD. Interacts with CFAP157. Interacts with CEP19 (via C-terminus). Interacts with CEP78; promoting CEP78 localization to centrosome and centriole. In terms of processing, phosphorylated during mitosis. In terms of tissue distribution, detected in heart, brain, skeletal muscle, testis, placenta, lung, liver, kidney and pancreas.

It is found in the cytoplasm. It localises to the cytoskeleton. The protein localises to the microtubule organizing center. The protein resides in the centrosome. Its subcellular location is the spindle. It is found in the nucleus. It localises to the centriole. The protein localises to the cilium basal body. Its function is as follows. Plays an essential role in centriole growth by stabilizing a procentriolar seed composed of at least, SASS6 and CPAP. Required for anchoring microtubules to the centrosomes and for the integrity of the microtubule network. Recruits PPARA to discrete subcellular compartments and thereby modulates PPARA activity. Required for ciliation. The chain is Centrosome-associated protein 350 from Homo sapiens (Human).